The sequence spans 228 residues: Protein JAZ7 (228 aa).

Residues Leu-101–Lys-136 enclose the Tify domain. A Jas motif is present at residues Met-176–Tyr-199. Residues Ala-177–Arg-184 carry the Nuclear localization signal motif.

This sequence belongs to the TIFY/JAZ family. In terms of assembly, interacts with MYC2 (via N-terminus). JAZ7 competes with MED25 for binding to MYC2. Interacts with MTB1 (via N-terminus).

The protein localises to the nucleus. Repressor of jasmonate responses. The chain is Protein JAZ7 from Solanum lycopersicum (Tomato).